The primary structure comprises 308 residues: Uricase (308 aa).

Residues lysine 5 and threonine 65 each act as charge relay system in the active site. Urate is bound by residues threonine 65, aspartate 66, phenylalanine 177, arginine 194, isoleucine 242, glutamine 243, and asparagine 269. Residues alanine 283–glutamine 308 are disordered.

The protein belongs to the uricase family.

It catalyses the reaction urate + O2 + H2O = 5-hydroxyisourate + H2O2. It participates in purine metabolism; urate degradation; (S)-allantoin from urate: step 1/3. Catalyzes the oxidation of uric acid to 5-hydroxyisourate, which is further processed to form (S)-allantoin. The protein is Uricase of Haloferax volcanii (strain ATCC 29605 / DSM 3757 / JCM 8879 / NBRC 14742 / NCIMB 2012 / VKM B-1768 / DS2) (Halobacterium volcanii).